The following is a 717-amino-acid chain: F-box only protein 42 (717 aa).

Residues 1–30 (MASSSDSEDDSFMAVDQEETVLEGTMEQDE) are compositionally biased toward acidic residues. The interval 1–47 (MASSSDSEDDSFMAVDQEETVLEGTMEQDEEPHPVLEAEETRHNRSM) is disordered. Over residues 31 to 43 (EPHPVLEAEETRH) the composition is skewed to basic and acidic residues. Residues 44–93 (NRSMSELPEEVLEYILSFLSPYQEHKTAALVCKQWYRLIKGVAHQCYHGF) form the F-box domain. Kelch repeat units follow at residues 132–184 (SMYV…VYKD), 186–242 (LVLF…VIDD), 244–293 (MIVF…VIDD), and 295–342 (TILI…LWCH). 2 disordered regions span residues 361–472 (RAPL…SAAE) and 508–539 (PASS…GVHT). Low complexity predominate over residues 363–376 (PLSPSLNSRPSPIS). Ser365 and Ser373 each carry phosphoserine. The residue at position 378 (Thr378) is a Phosphothreonine. Composition is skewed to polar residues over residues 416–426 (QRQTPSGSREG) and 455–469 (SLDS…STPS). Ser552 carries the phosphoserine modification. Positions 570 to 596 (GPSASAALSPPLGSSPGSPGSQSLSSG) are enriched in low complexity. The disordered stretch occupies residues 570 to 635 (GPSASAALSP…PQSLNVGKPL (66 aa)).

In terms of assembly, component of some SCF complex, composed of CUL1, SKP1, RBX1 and FBXO42. Interacts (via the kelch domain) with p53/TP53; interaction is direct.

Its function is as follows. Substrate-recognition component of some SCF (SKP1-CUL1-F-box protein)-type E3 ubiquitin ligase complex. Specifically recognizes p53/TP53, promoting its ubiquitination and degradation. The protein is F-box only protein 42 (FBXO42) of Pongo abelii (Sumatran orangutan).